Here is a 280-residue protein sequence, read N- to C-terminus: 2-dehydro-3-deoxyphosphooctonate aldolase (280 aa).

It belongs to the KdsA family.

It localises to the cytoplasm. It carries out the reaction D-arabinose 5-phosphate + phosphoenolpyruvate + H2O = 3-deoxy-alpha-D-manno-2-octulosonate-8-phosphate + phosphate. It functions in the pathway carbohydrate biosynthesis; 3-deoxy-D-manno-octulosonate biosynthesis; 3-deoxy-D-manno-octulosonate from D-ribulose 5-phosphate: step 2/3. Its pathway is bacterial outer membrane biogenesis; lipopolysaccharide biosynthesis. This chain is 2-dehydro-3-deoxyphosphooctonate aldolase, found in Neisseria meningitidis serogroup C / serotype 2a (strain ATCC 700532 / DSM 15464 / FAM18).